Consider the following 61-residue polypeptide: Large ribosomal subunit protein bL32 (61 aa).

The span at 1 to 19 shows a compositional bias: basic residues; it reads MAHPKRRQSKTRTAKRRTH. The segment at 1-20 is disordered; sequence MAHPKRRQSKTRTAKRRTHD.

It belongs to the bacterial ribosomal protein bL32 family.

This Bacteroides fragilis (strain YCH46) protein is Large ribosomal subunit protein bL32.